The following is a 736-amino-acid chain: MNYRVPSLKATALAMAALTQALTTWDAAYEKALADLASLTQSEKVGVVSGITWEGGPCVGNTYAPESIAYPSLCLQDGPLGIRFANPVTAFPAGINAGATWDRELLRARGAAMGEEAKGLGVHVQLAPVAGALGKIPSAGRNWEGFTSDPYLSGIAMAETIHGMQGSGVQACAKHYILNEQEHSRETISSNVDDRTMHEVYLWPFYDAVKANVASVMCSYNKINGTWACENEGILDTLLKQELGFRGYVMSDWNAQHSTVASANTGLDMTMPGSDFSQPPGSIYWNENLAEAVANGSVPQARVDDMVTRILAAWYLLEQDQGYPAVAFDSRNGGKASVDVTADHADIARTVARDSIVLLKNSNNTLPLRNPSSIAVVGSDAIVNPDGPNACTDRGCNVGTLAQGWGSGTAEFPYLVAPLDAIQERSSGNGTKVVTSTTDDATAGADAAASADIAIVFISSDSGEGYITVEGHQGDRNNLDPWHGGNDLVKAVAAVNKKTIVVVHSTGPVVLETILAQPNVVAVVWAGIPGQESGNALADVLYGDVSPSGKLPYTIGKSEADYGTTWVANGADDDFPEGLFIDYRHFDKNEIEPRYEFGFGLSYTRFNFSNLAINIDATSGPTSGAVDVGGAADLYDSVGTISATVTNVGGVSGAEVAQLYIGFPSSAPETPPKQLRGFQKLPLAGGADGVAEFELTRRDISYWDVGQQKWVVPEGSFQVYVGASSRDIRLDGSFTV.

The N-terminal stretch at 1–21 is a signal peptide; that stretch reads MNYRVPSLKATALAMAALTQA. The N-linked (GlcNAc...) asparagine glycan is linked to asparagine 224. Aspartate 252 is a catalytic residue. N-linked (GlcNAc...) asparagine glycans are attached at residues asparagine 295, asparagine 363, asparagine 429, and asparagine 607.

It belongs to the glycosyl hydrolase 3 family.

It is found in the secreted. The enzyme catalyses Hydrolysis of terminal, non-reducing beta-D-glucosyl residues with release of beta-D-glucose.. The protein operates within glycan metabolism; cellulose degradation. Its function is as follows. Beta-glucosidases are one of a number of cellulolytic enzymes involved in the degradation of cellulosic biomass. Catalyzes the last step releasing glucose from the inhibitory cellobiose. This chain is Probable beta-glucosidase L (bglL), found in Aspergillus terreus (strain NIH 2624 / FGSC A1156).